The following is a 250-amino-acid chain: Copper homeostasis protein cutC homolog (250 aa).

This sequence belongs to the CutC family.

In terms of biological role, involved in copper homeostasis. Affects body morphology and length, egg laying and brood size. This chain is Copper homeostasis protein cutC homolog (cutc-1), found in Caenorhabditis elegans.